The following is a 242-amino-acid chain: 1-(5-phosphoribosyl)-5-[(5-phosphoribosylamino)methylideneamino] imidazole-4-carboxamide isomerase (242 aa).

The Proton acceptor role is filled by Asp8. The active-site Proton donor is Asp130.

The protein belongs to the HisA/HisF family.

It is found in the cytoplasm. The catalysed reaction is 1-(5-phospho-beta-D-ribosyl)-5-[(5-phospho-beta-D-ribosylamino)methylideneamino]imidazole-4-carboxamide = 5-[(5-phospho-1-deoxy-D-ribulos-1-ylimino)methylamino]-1-(5-phospho-beta-D-ribosyl)imidazole-4-carboxamide. It functions in the pathway amino-acid biosynthesis; L-histidine biosynthesis; L-histidine from 5-phospho-alpha-D-ribose 1-diphosphate: step 4/9. This Thioalkalivibrio sulfidiphilus (strain HL-EbGR7) protein is 1-(5-phosphoribosyl)-5-[(5-phosphoribosylamino)methylideneamino] imidazole-4-carboxamide isomerase.